The chain runs to 349 residues: N-acetyltaurine hydrolase (349 aa).

A divalent metal cation contacts are provided by histidine 26, histidine 28, glutamate 169, histidine 201, histidine 230, and aspartate 298.

It belongs to the metallo-dependent hydrolases superfamily. Phosphotriesterase family. Requires a divalent metal cation as cofactor.

It is found in the cytoplasm. The protein resides in the cytosol. It carries out the reaction N-acetyltaurine + H2O = taurine + acetate. The enzyme catalyses N-propanoyltaurine + H2O = propanoate + taurine. The catalysed reaction is N-acetyl-L-methionine + H2O = L-methionine + acetate. It catalyses the reaction N-acetyl-L-isoleucine + H2O = L-isoleucine + acetate. It carries out the reaction N-acetyl-L-leucine + H2O = L-leucine + acetate. The enzyme catalyses N-acetyl-L-valine + H2O = L-valine + acetate. N-acetyltaurine hydrolase that catalyzes the hydrolysis of N-acetyltaurine into taurine and acetate. PTER also acts on other N-acetyl amino acids (Met, Ile, Leu, Val) and N-propionyltaurine, but at lower rates. The protein is N-acetyltaurine hydrolase (pter) of Xenopus tropicalis (Western clawed frog).